A 278-amino-acid polypeptide reads, in one-letter code: Biotin synthase (278 aa).

A Radical SAM core domain is found at M1 to R227. C16, C20, and C23 together coordinate [4Fe-4S] cluster. Positions 60, 96, and 154 each coordinate [2Fe-2S] cluster.

This sequence belongs to the radical SAM superfamily. Biotin synthase family. Homodimer. [4Fe-4S] cluster serves as cofactor. [2Fe-2S] cluster is required as a cofactor.

The catalysed reaction is (4R,5S)-dethiobiotin + (sulfur carrier)-SH + 2 reduced [2Fe-2S]-[ferredoxin] + 2 S-adenosyl-L-methionine = (sulfur carrier)-H + biotin + 2 5'-deoxyadenosine + 2 L-methionine + 2 oxidized [2Fe-2S]-[ferredoxin]. The protein operates within cofactor biosynthesis; biotin biosynthesis; biotin from 7,8-diaminononanoate: step 2/2. In terms of biological role, catalyzes the conversion of dethiobiotin (DTB) to biotin by the insertion of a sulfur atom into dethiobiotin via a radical-based mechanism. This Campylobacter jejuni subsp. jejuni serotype O:2 (strain ATCC 700819 / NCTC 11168) protein is Biotin synthase.